Consider the following 447-residue polypeptide: N-succinylarginine dihydrolase (447 aa).

Substrate contacts are provided by residues 19-28 (AGLSFGNEAS), N110, and 137-138 (HR). The active site involves E174. Residue R212 participates in substrate binding. Residue H248 is part of the active site. Substrate is bound by residues D250 and N359. The Nucleophile role is filled by C365.

The protein belongs to the succinylarginine dihydrolase family. As to quaternary structure, homodimer.

It catalyses the reaction N(2)-succinyl-L-arginine + 2 H2O + 2 H(+) = N(2)-succinyl-L-ornithine + 2 NH4(+) + CO2. It functions in the pathway amino-acid degradation; L-arginine degradation via AST pathway; L-glutamate and succinate from L-arginine: step 2/5. Functionally, catalyzes the hydrolysis of N(2)-succinylarginine into N(2)-succinylornithine, ammonia and CO(2). This Escherichia coli O6:K15:H31 (strain 536 / UPEC) protein is N-succinylarginine dihydrolase.